Reading from the N-terminus, the 470-residue chain is Cyclin-B1-3 (470 aa).

This sequence belongs to the cyclin family. Cyclin AB subfamily.

This Oryza sativa subsp. japonica (Rice) protein is Cyclin-B1-3 (CYCB1-3).